We begin with the raw amino-acid sequence, 319 residues long: ATP-dependent 6-phosphofructokinase (319 aa).

Gly-11 lines the ATP pocket. Residue 21-25 coordinates ADP; that stretch reads RAVVR. ATP-binding positions include 72–73 and 102–105; these read RC and GEGS. A Mg(2+)-binding site is contributed by Glu-103. 126 to 128 provides a ligand contact to substrate; sequence TID. Asp-128 (proton acceptor) is an active-site residue. An ADP-binding site is contributed by Lys-155. Substrate-binding positions include Arg-163 and 170–172; that span reads MGR. ADP is bound by residues 186 to 188, Arg-212, and 214 to 216; these read GAE and KIN. Substrate-binding positions include Glu-223, Arg-244, and 250–253; that span reads HVQR.

It belongs to the phosphofructokinase type A (PFKA) family. ATP-dependent PFK group I subfamily. Prokaryotic clade 'B1' sub-subfamily. As to quaternary structure, homotetramer. It depends on Mg(2+) as a cofactor.

The protein localises to the cytoplasm. The enzyme catalyses beta-D-fructose 6-phosphate + ATP = beta-D-fructose 1,6-bisphosphate + ADP + H(+). It participates in carbohydrate degradation; glycolysis; D-glyceraldehyde 3-phosphate and glycerone phosphate from D-glucose: step 3/4. Its activity is regulated as follows. Allosterically activated by ADP and other diphosphonucleosides, and allosterically inhibited by phosphoenolpyruvate. In terms of biological role, catalyzes the phosphorylation of D-fructose 6-phosphate to fructose 1,6-bisphosphate by ATP, the first committing step of glycolysis. The polypeptide is ATP-dependent 6-phosphofructokinase (Thermotoga petrophila (strain ATCC BAA-488 / DSM 13995 / JCM 10881 / RKU-1)).